Reading from the N-terminus, the 372-residue chain is Chaperone protein DnaJ (372 aa).

The J domain occupies 5-70; sequence DYYELLEISR…EKKSIYDRYG (66 aa). The segment at 134–211 adopts a CR-type zinc-finger fold; sequence GCNKEINYKY…CKGTGYEEVK (78 aa). Residues C147, C150, C163, C166, C185, C188, C199, and C202 each contribute to the Zn(2+) site. 4 CXXCXGXG motif repeats span residues 147-154, 163-170, 185-192, and 199-206; these read CKPCEGTG, CPTCKGQG, CPRCGGTG, and CKSCKGTG.

The protein belongs to the DnaJ family. As to quaternary structure, homodimer. Requires Zn(2+) as cofactor.

Its subcellular location is the cytoplasm. In terms of biological role, participates actively in the response to hyperosmotic and heat shock by preventing the aggregation of stress-denatured proteins and by disaggregating proteins, also in an autonomous, DnaK-independent fashion. Unfolded proteins bind initially to DnaJ; upon interaction with the DnaJ-bound protein, DnaK hydrolyzes its bound ATP, resulting in the formation of a stable complex. GrpE releases ADP from DnaK; ATP binding to DnaK triggers the release of the substrate protein, thus completing the reaction cycle. Several rounds of ATP-dependent interactions between DnaJ, DnaK and GrpE are required for fully efficient folding. Also involved, together with DnaK and GrpE, in the DNA replication of plasmids through activation of initiation proteins. The sequence is that of Chaperone protein DnaJ from Aliarcobacter butzleri (strain RM4018) (Arcobacter butzleri).